The chain runs to 157 residues: MAEKNERPIKVIAENRKARFNYAIEDTLEAGIALTGTEVKSIRNGKSTIAESYADPKDGEIWLINANIPEYLQANRFNHEPKRPRKLLLHRKQINKLMGAVERQGMTLVPLKMYFNERGRVKLQLALAKGKQLHDKRDTEKKRDWSREKGRIMRARG.

Residues 131–157 form a disordered region; the sequence is KQLHDKRDTEKKRDWSREKGRIMRARG. Basic and acidic residues predominate over residues 132-151; it reads QLHDKRDTEKKRDWSREKGR.

It belongs to the SmpB family.

It localises to the cytoplasm. Required for rescue of stalled ribosomes mediated by trans-translation. Binds to transfer-messenger RNA (tmRNA), required for stable association of tmRNA with ribosomes. tmRNA and SmpB together mimic tRNA shape, replacing the anticodon stem-loop with SmpB. tmRNA is encoded by the ssrA gene; the 2 termini fold to resemble tRNA(Ala) and it encodes a 'tag peptide', a short internal open reading frame. During trans-translation Ala-aminoacylated tmRNA acts like a tRNA, entering the A-site of stalled ribosomes, displacing the stalled mRNA. The ribosome then switches to translate the ORF on the tmRNA; the nascent peptide is terminated with the 'tag peptide' encoded by the tmRNA and targeted for degradation. The ribosome is freed to recommence translation, which seems to be the essential function of trans-translation. The protein is SsrA-binding protein of Rhodopseudomonas palustris (strain BisB18).